A 229-amino-acid polypeptide reads, in one-letter code: uncharacterized protein (229 aa).

22–29 (GMIAFGKT) contributes to the ATP binding site.

This is an uncharacterized protein from Mycoplasma pneumoniae (strain ATCC 29342 / M129 / Subtype 1) (Mycoplasmoides pneumoniae).